A 706-amino-acid polypeptide reads, in one-letter code: GDNF-inducible zinc finger protein 1 (706 aa).

Residues 31 to 103 (CDVTVSIENQ…VYTAKVRVEE (73 aa)) form the BTB domain. The segment covering 149-165 (VEASSGPQVSVTPSSKA) has biased composition (polar residues). Disordered stretches follow at residues 149–220 (VEAS…PKIR) and 242–308 (RRLR…KDGE). Composition is skewed to basic and acidic residues over residues 197–212 (PSKK…KDVA) and 242–277 (RRLR…EPAA). 10 C2H2-type zinc fingers span residues 315–337 (FQCT…IKYH), 346–369 (YRCD…RHVH), 375–398 (FPCE…LQVH), 405–427 (HRCG…ERTH), 433–455 (YGCT…LRVH), 461–483 (FVCD…KRCH), 489–511 (FMCE…NRIH), 517–539 (FKCE…IKVH), 545–567 (YCCD…HRIH), and 573–595 (YMCN…TSIH). Ser611 bears the Phosphoserine mark.

The protein belongs to the krueppel C2H2-type zinc-finger protein family. In terms of assembly, interacts with NCL. Expressed in several tissues, with highest levels in liver. Also expressed in embryos from 7 to 17 dpc.

It is found in the nucleus. The protein localises to the cytoplasm. Its subcellular location is the nucleolus. In terms of biological role, transcriptional repressor that binds the GZF1 responsive element (GRE) (consensus: 5'-TGCGCN[TG][CA]TATA-3'). May be regulating VSX2/HOX10 expression. The sequence is that of GDNF-inducible zinc finger protein 1 from Mus musculus (Mouse).